Consider the following 238-residue polypeptide: Proteasome subunit beta type-6 (238 aa).

Ala-2 is modified (N-acetylalanine). Positions 2–33 are cleaved as a propeptide — removed in mature form; sequence AAALAVRRAGSAPAFGPEALTPDWENREVSTG. The Nucleophile role is filled by Thr-34. Residue Thr-68 is modified to Phosphothreonine.

Belongs to the peptidase T1B family. The 26S proteasome consists of a 20S proteasome core and two 19S regulatory subunits. The 20S proteasome core is a barrel-shaped complex made of 28 subunits that are arranged in four stacked rings. The two outer rings are each formed by seven alpha subunits, and the two inner rings are formed by seven beta subunits. The proteolytic activity is exerted by three beta-subunits PSMB5, PSMB6 and PSMB7.

It is found in the cytoplasm. The protein localises to the nucleus. The enzyme catalyses Cleavage of peptide bonds with very broad specificity.. In terms of biological role, component of the 20S core proteasome complex involved in the proteolytic degradation of most intracellular proteins. This complex plays numerous essential roles within the cell by associating with different regulatory particles. Associated with two 19S regulatory particles, forms the 26S proteasome and thus participates in the ATP-dependent degradation of ubiquitinated proteins. The 26S proteasome plays a key role in the maintenance of protein homeostasis by removing misfolded or damaged proteins that could impair cellular functions, and by removing proteins whose functions are no longer required. Associated with the PA200 or PA28, the 20S proteasome mediates ubiquitin-independent protein degradation. This type of proteolysis is required in several pathways including spermatogenesis (20S-PA200 complex) or generation of a subset of MHC class I-presented antigenic peptides (20S-PA28 complex). Within the 20S core complex, PSMB6 displays a peptidylglutamyl-hydrolyzing activity also termed postacidic or caspase-like activity, meaning that the peptides bond hydrolysis occurs directly after acidic residues. This is Proteasome subunit beta type-6 (Psmb6) from Mus musculus (Mouse).